A 594-amino-acid polypeptide reads, in one-letter code: MLRSHAAGLLREGDAGQQVTLAGWVARRRDHGGVIFIDLRDASGIAQVVFRDPQDTEVLAQAHRLRAEFCVSVAGVVEIRPEGNANPEIATGEIEVNATSLTVLGECAPLPFQLDEPAGEELRLKYRYLDLRRDDPAAAIRLRSRVNAAARAVLARHDFVEIETPTITRSTPEGARDFLVPARLHPGSFYALPQSPQLFKQLLMVAGMERYYQIARCYRDEDFRADRQPEFTQLDMEMSFVDAEDIIAISEEVLTELWALIGYRIPTPIPRIGYAEAMRRFGTDKPDLRFGLELVECTDFFSDTTFRVFQAPYVGAVVMPGGASQPRRTLDGWQDWAKQRGHRGLAYVLVAEDGTLGGPVAKNLTEAERTGLADHVGAKPGDCIFFSAGPVKSSRALLGAARVEIANRLGLIDPDAWAFVWVVDPPLFEPADEATAAGEVAVGSGAWTAVHHAFTAPKPEWEDRIESDTGSVLADAYDIVCNGHEIGGGSVRIHRRDIQERVFAVMGLDKAEAEEKFGFLLEAFMFGAPPHGGIAFGWDRTTALLAGMDSIREVIAFPKTGGGVDPLTDAPAPITAQQRKESGIDAQPKRVQQA.

Residue Glu-173 coordinates L-aspartate. The aspartate stretch occupies residues Gln-197–Lys-200. Arg-219 serves as a coordination point for L-aspartate. ATP is bound by residues Arg-219–Glu-221 and Gln-228. Position 451 (His-451) interacts with L-aspartate. Position 485 (Glu-485) interacts with ATP. Residue Arg-492 coordinates L-aspartate. Gly-537 to Arg-540 is a binding site for ATP. A disordered region spans residues Pro-566–Ala-594.

The protein belongs to the class-II aminoacyl-tRNA synthetase family. Type 1 subfamily. In terms of assembly, homodimer.

It is found in the cytoplasm. It catalyses the reaction tRNA(Asx) + L-aspartate + ATP = L-aspartyl-tRNA(Asx) + AMP + diphosphate. Aspartyl-tRNA synthetase with relaxed tRNA specificity since it is able to aspartylate not only its cognate tRNA(Asp) but also tRNA(Asn). Reaction proceeds in two steps: L-aspartate is first activated by ATP to form Asp-AMP and then transferred to the acceptor end of tRNA(Asp/Asn). The sequence is that of Aspartate--tRNA(Asp/Asn) ligase from Mycobacterium tuberculosis (strain CDC 1551 / Oshkosh).